Consider the following 387-residue polypeptide: Dual specificity protein phosphatase MPK-4 (387 aa).

The segment covering 1-15 (MEQSQSQRQAWPSSS) has biased composition (polar residues). Residues 1 to 27 (MEQSQSQRQAWPSSSAGGGKAQDSGVL) are disordered. Positions 35 to 182 (GPVSIDEVDT…LKLFRRMGCK (148 aa)) constitute a Tyrosine-protein phosphatase domain. The Phosphocysteine intermediate role is filled by Cys126. Positions 248–267 (LEHKPRDRPPQEVVPKEKEE) are disordered.

Belongs to the protein-tyrosine phosphatase family. Non-receptor class dual specificity subfamily. In terms of assembly, interacts (via tyrosine-protein phosphatase domain) with bsk/JNK; the interaction dephosphorylates bsk.

It is found in the nucleus. It localises to the cytoplasm. It carries out the reaction O-phospho-L-tyrosyl-[protein] + H2O = L-tyrosyl-[protein] + phosphate. The enzyme catalyses O-phospho-L-seryl-[protein] + H2O = L-seryl-[protein] + phosphate. The catalysed reaction is O-phospho-L-threonyl-[protein] + H2O = L-threonyl-[protein] + phosphate. Inhibited by the tyrosine phosphatase inhibitor sodium vanadate. In terms of biological role, dual specificity phosphatase; can dephosphorylate both phosphotyrosine and phosphoserine or phosphothreonine residues. May suppress bsk/JNK activation during the immune response. The chain is Dual specificity protein phosphatase MPK-4 from Drosophila melanogaster (Fruit fly).